Here is a 282-residue protein sequence, read N- to C-terminus: NAD-dependent protein deacetylase 1 (282 aa).

The region spanning 1 to 282 (MTVGRAESPE…ADELSPLPTH (282 aa)) is the Deacetylase sirtuin-type domain. NAD(+) is bound by residues 25-45 (GAGISTDSGIPDYRGPESPPS) and 101-104 (QNVD). The Proton acceptor role is filled by histidine 119. Zn(2+) contacts are provided by cysteine 127, cysteine 130, cysteine 181, and cysteine 184. Residues 221–223 (GSS), 247–249 (NRG), and cysteine 265 contribute to the NAD(+) site.

Belongs to the sirtuin family. Class II subfamily. The cofactor is Zn(2+).

It is found in the cytoplasm. It carries out the reaction N(6)-acetyl-L-lysyl-[protein] + NAD(+) + H2O = 2''-O-acetyl-ADP-D-ribose + nicotinamide + L-lysyl-[protein]. Its function is as follows. NAD-dependent protein deacetylase which modulates the activities of several enzymes which are inactive in their acetylated form. This is NAD-dependent protein deacetylase 1 from Mycobacterium avium (strain 104).